The chain runs to 401 residues: Imidazolonepropionase (401 aa).

2 residues coordinate Fe(3+): H70 and H72. Zn(2+) is bound by residues H70 and H72. 3 residues coordinate 4-imidazolone-5-propanoate: R79, Y142, and H175. Y142 serves as a coordination point for N-formimidoyl-L-glutamate. Residue H240 coordinates Fe(3+). H240 lines the Zn(2+) pocket. Residue Q243 participates in 4-imidazolone-5-propanoate binding. D315 contributes to the Fe(3+) binding site. D315 is a binding site for Zn(2+). 2 residues coordinate N-formimidoyl-L-glutamate: N317 and G319. T320 contributes to the 4-imidazolone-5-propanoate binding site.

This sequence belongs to the metallo-dependent hydrolases superfamily. HutI family. Requires Zn(2+) as cofactor. Fe(3+) is required as a cofactor.

Its subcellular location is the cytoplasm. It catalyses the reaction 4-imidazolone-5-propanoate + H2O = N-formimidoyl-L-glutamate. The protein operates within amino-acid degradation; L-histidine degradation into L-glutamate; N-formimidoyl-L-glutamate from L-histidine: step 3/3. Functionally, catalyzes the hydrolytic cleavage of the carbon-nitrogen bond in imidazolone-5-propanoate to yield N-formimidoyl-L-glutamate. It is the third step in the universal histidine degradation pathway. This is Imidazolonepropionase from Caulobacter vibrioides (strain ATCC 19089 / CIP 103742 / CB 15) (Caulobacter crescentus).